Reading from the N-terminus, the 447-residue chain is Chromosomal replication initiator protein DnaA (447 aa).

The domain I, interacts with DnaA modulators stretch occupies residues 1–79 (MVSCENLWQQ…TGQEITVKLI (79 aa)). A domain II region spans residues 79-105 (ITDGLEPHSLIGQESSLPMETTPKNAT). The domain III, AAA+ region stretch occupies residues 106–322 (ALNGKYTFSR…GALIRAIAYT (217 aa)). The ATP site is built by Gly150, Gly152, Lys153, and Thr154. The tract at residues 323 to 447 (SLSNVAMTVE…INIAGQAPES (125 aa)) is domain IV, binds dsDNA.

This sequence belongs to the DnaA family. In terms of assembly, oligomerizes as a right-handed, spiral filament on DNA at oriC.

The protein localises to the cytoplasm. In terms of biological role, plays an essential role in the initiation and regulation of chromosomal replication. ATP-DnaA binds to the origin of replication (oriC) to initiate formation of the DNA replication initiation complex once per cell cycle. Binds the DnaA box (a 9 base pair repeat at the origin) and separates the double-stranded (ds)DNA. Forms a right-handed helical filament on oriC DNA; dsDNA binds to the exterior of the filament while single-stranded (ss)DNA is stabiized in the filament's interior. The ATP-DnaA-oriC complex binds and stabilizes one strand of the AT-rich DNA unwinding element (DUE), permitting loading of DNA polymerase. After initiation quickly degrades to an ADP-DnaA complex that is not apt for DNA replication. Binds acidic phospholipids. Isolated domain IV (residues 348-447) binds both E.coli and B.subtilis oriC. The protein is Chromosomal replication initiator protein DnaA of Synechocystis sp. (strain ATCC 27184 / PCC 6803 / Kazusa).